A 347-amino-acid polypeptide reads, in one-letter code: Probable dual-specificity RNA methyltransferase RlmN (347 aa).

E91 functions as the Proton acceptor in the catalytic mechanism. Residues 97–327 (YKYGNSICVS…ATVRREMGSD (231 aa)) form the Radical SAM core domain. C104 and C332 are disulfide-bonded. [4Fe-4S] cluster is bound by residues C111, C115, and C118. Residues 158-159 (GE), S190, 213-215 (SLH), and N289 contribute to the S-adenosyl-L-methionine site. C332 acts as the S-methylcysteine intermediate in catalysis.

It belongs to the radical SAM superfamily. RlmN family. Requires [4Fe-4S] cluster as cofactor.

The protein resides in the cytoplasm. It carries out the reaction adenosine(2503) in 23S rRNA + 2 reduced [2Fe-2S]-[ferredoxin] + 2 S-adenosyl-L-methionine = 2-methyladenosine(2503) in 23S rRNA + 5'-deoxyadenosine + L-methionine + 2 oxidized [2Fe-2S]-[ferredoxin] + S-adenosyl-L-homocysteine. It catalyses the reaction adenosine(37) in tRNA + 2 reduced [2Fe-2S]-[ferredoxin] + 2 S-adenosyl-L-methionine = 2-methyladenosine(37) in tRNA + 5'-deoxyadenosine + L-methionine + 2 oxidized [2Fe-2S]-[ferredoxin] + S-adenosyl-L-homocysteine. Specifically methylates position 2 of adenine 2503 in 23S rRNA and position 2 of adenine 37 in tRNAs. The sequence is that of Probable dual-specificity RNA methyltransferase RlmN from Clostridium perfringens (strain SM101 / Type A).